Here is a 270-residue protein sequence, read N- to C-terminus: 3-phenylpropionate-dihydrodiol/cinnamic acid-dihydrodiol dehydrogenase (270 aa).

Position 10 to 34 (10 to 34 (FITGGGSGLGLALVERFIEEGAQVA)) interacts with NAD(+). S143 lines the substrate pocket. The active-site Proton acceptor is the Y156.

This sequence belongs to the short-chain dehydrogenases/reductases (SDR) family.

The catalysed reaction is 3-(cis-5,6-dihydroxycyclohexa-1,3-dien-1-yl)propanoate + NAD(+) = 3-(2,3-dihydroxyphenyl)propanoate + NADH + H(+). It carries out the reaction (2E)-3-(cis-5,6-dihydroxycyclohexa-1,3-dien-1-yl)prop-2-enoate + NAD(+) = (2E)-3-(2,3-dihydroxyphenyl)prop-2-enoate + NADH + H(+). It functions in the pathway aromatic compound metabolism; 3-phenylpropanoate degradation. In terms of biological role, converts 3-phenylpropionate-dihydrodiol (PP-dihydrodiol) and cinnamic acid-dihydrodiol (CI-dihydrodiol) into 3-(2,3-dihydroxylphenyl)propanoic acid (DHPP) and 2,3-dihydroxicinnamic acid (DHCI), respectively. The polypeptide is 3-phenylpropionate-dihydrodiol/cinnamic acid-dihydrodiol dehydrogenase (Escherichia coli O7:K1 (strain IAI39 / ExPEC)).